The sequence spans 962 residues: Ran-binding proteins 9/10 homolog (962 aa).

2 stretches are compositionally biased toward low complexity: residues 1 to 33 and 41 to 52; these read MENV…LSQS and APSTSRSHSHSP. Disordered stretches follow at residues 1–246, 271–296, and 313–402; these read MENV…EQQP, EDDD…EVAS, and SSAS…QGVD. Over residues 80–91 the composition is skewed to basic and acidic residues; sequence TEARENSPHDHS. Residues 118–132 show a composition bias toward low complexity; that stretch reads QQQQEAPPLQQDQQE. Residues 146–164 show a composition bias toward polar residues; it reads DQQNQEYPAVHQDQQAEQN. The segment covering 165–202 has biased composition (basic and acidic residues); that stretch reads QELHHIEGLIRHRESQNPEEHPPQASLENRETLGREDT. Residues 236-245 show a composition bias toward polar residues; the sequence is SGSQDLNEQQ. Residues 271–284 show a composition bias toward acidic residues; the sequence is EDDDEEVDEEEEVV. The segment covering 321-343 has biased composition (low complexity); sequence SSNNNNNNISNHNNNNNNSNSNS. Composition is skewed to polar residues over residues 351-360 and 368-378; these read FYSNNGSHFS and NPRSSTQTSSP. A phosphoserine mark is found at Ser-387, Ser-393, and Ser-395. The segment covering 389–398 has biased composition (polar residues); that stretch reads PAASSNSPQH. A B30.2/SPRY domain is found at 400 to 587; it reads GVDPLRLLYP…VDANFGQEPF (188 aa). Residues 617–649 enclose the LisH domain; sequence PENLMNRLVSTYLVHNAFSKTAEAFNGYTNQTF. The CTLH domain maps to 655 to 712; that stretch reads SIKTRQKIIKLILTGKMSQAIEHTLRSFPGLLENNKNLWFALKCRQFIEMINGADIEN. Residues 800–820 form a disordered region; sequence EMEPCQSHSNGGDSSSNGNAS. Residues 806-820 are compositionally biased toward low complexity; sequence SHSNGGDSSSNGNAS.

The protein belongs to the RANBP9/10 family. In terms of tissue distribution, expressed in the GSCs and in dividing cysts. Expression is reduced in the germline as individual egg chambers are formed. Isoform C is expressed in all somatic and germline cells of the ovary. Isoform D is expressed in the GSC niche.

Its subcellular location is the cytoplasm. It is found in the membrane. The protein resides in the nucleus. In terms of biological role, may be involved in JAK/STAT signaling. Isoform D is required for the proper arrangement of niche cells and is autonomously required for proper niche cell size, isoform C negatively regulates the adhesive properties of the niche. The germline stem cell (GSC) niche in ovaries is made up of two somatic cell types: 8-9 cells in a single-filed array make up the terminal filament (TF), and a tight cluster of 5 or 6 cap cells (CpC). Regulating the size and adhesive properties of the CpCs is an important component of the mechanism that controls their capacity to support stem cells, isoform C and isoform D are important factors in mediating this regulation. In contrast, isoform C acts as a positive regulator of cell adhesion in follicle cell epithelium. In Drosophila melanogaster (Fruit fly), this protein is Ran-binding proteins 9/10 homolog (RanBPM).